Here is a 354-residue protein sequence, read N- to C-terminus: NADH-quinone oxidoreductase subunit H (354 aa).

The next 8 helical transmembrane spans lie at 25-45 (LVRI…LILW), 91-111 (WLYL…WAVI), 126-146 (LLYA…AGWA), 170-190 (MGFA…SEIV), 205-225 (FLSW…ISGI), 253-273 (MAFA…SALA), 290-310 (FIPG…VFIW), and 330-350 (VFLP…MSPL).

The protein belongs to the complex I subunit 1 family. In terms of assembly, NDH-1 is composed of 14 different subunits. Subunits NuoA, H, J, K, L, M, N constitute the membrane sector of the complex.

Its subcellular location is the cell inner membrane. The enzyme catalyses a quinone + NADH + 5 H(+)(in) = a quinol + NAD(+) + 4 H(+)(out). Its function is as follows. NDH-1 shuttles electrons from NADH, via FMN and iron-sulfur (Fe-S) centers, to quinones in the respiratory chain. The immediate electron acceptor for the enzyme in this species is believed to be ubiquinone. Couples the redox reaction to proton translocation (for every two electrons transferred, four hydrogen ions are translocated across the cytoplasmic membrane), and thus conserves the redox energy in a proton gradient. This subunit may bind ubiquinone. The chain is NADH-quinone oxidoreductase subunit H from Burkholderia mallei (strain ATCC 23344).